Consider the following 228-residue polypeptide: Ribulose-phosphate 3-epimerase (228 aa).

Serine 9 contacts substrate. Histidine 34, aspartate 36, histidine 68, and aspartate 177 together coordinate a divalent metal cation. Aspartate 36 acts as the Proton acceptor in catalysis. Substrate is bound by residues histidine 68, 177-179, and 199-200; these read DGG and GS. The Proton donor role is filled by aspartate 177.

Belongs to the ribulose-phosphate 3-epimerase family. A divalent metal cation serves as cofactor.

The enzyme catalyses D-ribulose 5-phosphate = D-xylulose 5-phosphate. It participates in carbohydrate degradation. Its function is as follows. Catalyzes the reversible epimerization of D-ribulose 5-phosphate to D-xylulose 5-phosphate. This chain is Ribulose-phosphate 3-epimerase, found in Buchnera aphidicola subsp. Schizaphis graminum (strain Sg).